A 563-amino-acid polypeptide reads, in one-letter code: Bifunctional dihydrofolate reductase-thymidylate synthase (563 aa).

Residues 3–195 (KFNIIAAINN…ILLRFQEYSV (193 aa)) enclose the DHFR domain. Residue 117 to 124 (GGGVIYDL) coordinates NADP(+). Positions 275-563 (YIELVKTIME…CPSISAEMIA (289 aa)) are thymidylate synthase. Arginine 292 is a binding site for dUMP. Cysteine 435 is an active-site residue. DUMP contacts are provided by residues histidine 436, 464 to 468 (QRSWD), asparagine 474, and 504 to 506 (HIY).

This sequence in the N-terminal section; belongs to the dihydrofolate reductase family. In the C-terminal section; belongs to the thymidylate synthase family.

It catalyses the reaction (6S)-5,6,7,8-tetrahydrofolate + NADP(+) = 7,8-dihydrofolate + NADPH + H(+). The enzyme catalyses dUMP + (6R)-5,10-methylene-5,6,7,8-tetrahydrofolate = 7,8-dihydrofolate + dTMP. The protein operates within cofactor biosynthesis; tetrahydrofolate biosynthesis; 5,6,7,8-tetrahydrofolate from 7,8-dihydrofolate: step 1/1. Functionally, bifunctional enzyme. Involved in de novo dTMP biosynthesis. Key enzyme in folate metabolism. Catalyzes an essential reaction for de novo glycine and purine synthesis, DNA precursor synthesis, and for the conversion of dUMP to dTMP. This is Bifunctional dihydrofolate reductase-thymidylate synthase from Acanthamoeba polyphaga mimivirus (APMV).